The following is a 519-amino-acid chain: MQLNPAEISELIKSRIEGLAASSDIRNQGTVVSVTDGIVRVHGLSDVMQGEMLEFPAAADGQPSFGLALNLERDSVGAVILGEYEHISEGDTVKCTGRILEVPVGPELIGRVVNALGQPIDGKGPINAKMTDVIEKVAPGVIARQSVDQPLQTGLKSIDSMVPIGRGQRELIIGDRQTGKTAVAIDAIINQKGQGVTCIYVAIGQKASSIKNVVRALEQAGAMEYTIVVAASASESAAMQYVSAYSGCTMGEYFRDRGEDALIVYDDLSKQAVAYRQVSLLLRRPPGREAFPGDVFYLHSRLLERAARVNADYVEAFTKGEVKGKTGSLTALPVIETQAGDVSAFVPTNVISITDGQIFLETSLFNAGIRPAINAGISVSRVGGAAQTKLIKGLSGGIRTDLAQYRELAAFAQFASDLDEATRKQLDRGARVTELLKQPQYSPLSTALMGATLFTVNKGFLDDVDVKKVLAFEAGLHQYLKTSHGALLDRLQQNRAFDKEGKDEAELTQAITAFKKSFV.

Glycine 174–threonine 181 contributes to the ATP binding site.

Belongs to the ATPase alpha/beta chains family. In terms of assembly, F-type ATPases have 2 components, CF(1) - the catalytic core - and CF(0) - the membrane proton channel. CF(1) has five subunits: alpha(3), beta(3), gamma(1), delta(1), epsilon(1). CF(0) has three main subunits: a(1), b(2) and c(9-12). The alpha and beta chains form an alternating ring which encloses part of the gamma chain. CF(1) is attached to CF(0) by a central stalk formed by the gamma and epsilon chains, while a peripheral stalk is formed by the delta and b chains.

The protein resides in the cell inner membrane. It catalyses the reaction ATP + H2O + 4 H(+)(in) = ADP + phosphate + 5 H(+)(out). In terms of biological role, produces ATP from ADP in the presence of a proton gradient across the membrane. The alpha chain is a regulatory subunit. This chain is ATP synthase subunit alpha, found in Acidovorax ebreus (strain TPSY) (Diaphorobacter sp. (strain TPSY)).